The chain runs to 172 residues: uncharacterized protein (172 aa).

Disordered regions lie at residues 1–54 (MPRR…GGSS) and 82–111 (ITGG…SVPE). A compositionally biased stretch (low complexity) spans 14–29 (AAPARSASTAAALPPR). Residues 30-47 (TMAPPPAPSRVQQAPPPT) show a composition bias toward pro residues. The segment covering 89–109 (SGSNNAPADTSVPQSSYSNSV) has biased composition (polar residues).

This is an uncharacterized protein from Schizosaccharomyces pombe (strain 972 / ATCC 24843) (Fission yeast).